The following is a 137-amino-acid chain: 2-iminobutanoate/2-iminopropanoate deaminase (137 aa).

S2 is modified (N-acetylserine). An N6-succinyllysine mark is found at K13 and K67. T74 is modified (phosphothreonine). Residue S136 is modified to Phosphoserine.

It belongs to the RutC family. In terms of assembly, homotrimer. Interacts with YTHDF2.

It is found in the cytoplasm. Its subcellular location is the nucleus. The protein localises to the peroxisome. The protein resides in the mitochondrion. The catalysed reaction is 2-iminobutanoate + H2O = 2-oxobutanoate + NH4(+). The enzyme catalyses 2-iminopropanoate + H2O = pyruvate + NH4(+). In terms of biological role, catalyzes the hydrolytic deamination of enamine/imine intermediates that form during the course of normal metabolism. May facilitate the release of ammonia from these potentially toxic reactive metabolites, reducing their impact on cellular components. It may act on enamine/imine intermediates formed by several types of pyridoxal-5'-phosphate-dependent dehydratases including L-threonine dehydratase. Functionally, also promotes endoribonucleolytic cleavage of some transcripts by promoting recruitment of the ribonuclease P/MRP complex. Acts by bridging YTHDF2 and the ribonuclease P/MRP complex. RIDA/HRSP12 binds to N6-methyladenosine (m6A)-containing mRNAs containing a 5'-GGUUC-3' motif: cooperative binding of RIDA/HRSP12 and YTHDF2 to such transcripts lead to recruitment of the ribonuclease P/MRP complex and subsequent endoribonucleolytic cleavage. The protein is 2-iminobutanoate/2-iminopropanoate deaminase of Bos taurus (Bovine).